A 204-amino-acid polypeptide reads, in one-letter code: Prephenate decarboxylase (204 aa).

This sequence belongs to the prephenate decarboxylase family.

It localises to the cytoplasm. It catalyses the reaction prephenate + H(+) = 3-[(4R)-4-hydroxycyclohexa-1,5-dien-1-yl]-2-oxopropanoate + CO2. The protein operates within antibiotic biosynthesis; bacilysin biosynthesis. Its function is as follows. Part of the bacABCDEF operon responsible for the biosynthesis of the nonribosomally synthesized dipeptide antibiotic bacilysin, composed of L-alanine and L-anticapsin. Bacilysin is an irreversible inactivator of the glutaminase domain of glucosamine synthetase. BacA is an unusual prephenate decarboxylase that avoids the typical aromatization of the cyclohexadienol ring of prephenate. BacA catalyzes the protonation of prephenate (1-carboxy-4-hydroxy-alpha-oxo-2,5-cyclohexadiene-1-propanoic acid) at C6 position, followed by a decarboxylation to produce the endocyclic-delta(4),delta(8)-7R-dihydro-hydroxyphenylpyruvate (en-H2HPP). En-H2HPP is able to undergo a slow nonenzymatic isomerization to produce the exocyclic-delta(3),delta(5)-dihydro-hydroxyphenylpyruvate (ex-H2HPP). BacA isomerizes only the pro-R double bond in prephenate. The protein is Prephenate decarboxylase of Bacillus amyloliquefaciens (Bacillus velezensis).